Consider the following 421-residue polypeptide: Serine/threonine-protein kinase OXI1 (421 aa).

One can recognise a Protein kinase domain in the interval 17–329; it reads LEVLSLLGRG…VEEIKGHDFF (313 aa). ATP contacts are provided by residues 23-31 and K45; that span reads LGRGAKGVV. Residue D149 is the Proton acceptor of the active site. The activation loop stretch occupies residues 167 to 246; that stretch reads DFDLSTNLAP…VGTEEYVAPE (80 aa). S235 is subject to Phosphoserine; by PDPK1. The AGC-kinase C-terminal domain maps to 330–421; that stretch reads RGVDWEKVIL…LESDNNFLVF (92 aa). The PIF motif lies at 418 to 421; sequence FLVF.

This sequence belongs to the protein kinase superfamily. AGC Ser/Thr protein kinase family. In terms of assembly, interacts with PDK1 and PDK2. Expressed in roots and root hair cells.

It catalyses the reaction L-seryl-[protein] + ATP = O-phospho-L-seryl-[protein] + ADP + H(+). It carries out the reaction L-threonyl-[protein] + ATP = O-phospho-L-threonyl-[protein] + ADP + H(+). With respect to regulation, activated in response to hydrogen peroxide and cellulase elicitor. Activated by PDK1 in a phosphatidic acid dependent manner. Its function is as follows. Involved in oxidative burst-mediated signaling. Required for basal resistance to P.parasitica infection and root hair growth. Partly required for the activation of MPK3 and MPK6 by hydrogen peroxide and cellulase elicitor. The polypeptide is Serine/threonine-protein kinase OXI1 (Arabidopsis thaliana (Mouse-ear cress)).